The following is a 745-amino-acid chain: Fatty acid oxidation complex subunit alpha (745 aa).

The interval 47–209 (VNTLKAKFAE…KMGLVDDVVP (163 aa)) is enoyl-CoA hydratase. The interval 325–745 (RAIHRVGVLG…LDEAAITAHN (421 aa)) is 3-hydroxyacyl-CoA dehydrogenase.

This sequence in the N-terminal section; belongs to the enoyl-CoA hydratase/isomerase family. The protein in the central section; belongs to the 3-hydroxyacyl-CoA dehydrogenase family. As to quaternary structure, heterotetramer of two alpha chains (FadJ) and two beta chains (FadI).

The protein resides in the cytoplasm. It catalyses the reaction a (3S)-3-hydroxyacyl-CoA = a (2E)-enoyl-CoA + H2O. It carries out the reaction a 4-saturated-(3S)-3-hydroxyacyl-CoA = a (3E)-enoyl-CoA + H2O. The enzyme catalyses a (3S)-3-hydroxyacyl-CoA + NAD(+) = a 3-oxoacyl-CoA + NADH + H(+). The catalysed reaction is (3S)-3-hydroxybutanoyl-CoA = (3R)-3-hydroxybutanoyl-CoA. It functions in the pathway lipid metabolism; fatty acid beta-oxidation. Functionally, catalyzes the formation of a hydroxyacyl-CoA by addition of water on enoyl-CoA. Also exhibits 3-hydroxyacyl-CoA epimerase and 3-hydroxyacyl-CoA dehydrogenase activities. The protein is Fatty acid oxidation complex subunit alpha of Yersinia enterocolitica serotype O:8 / biotype 1B (strain NCTC 13174 / 8081).